The sequence spans 139 residues: Large ribosomal subunit protein bL21 (139 aa).

It belongs to the bacterial ribosomal protein bL21 family. As to quaternary structure, part of the 50S ribosomal subunit. Contacts protein L20.

This protein binds to 23S rRNA in the presence of protein L20. This Prochlorococcus marinus (strain NATL1A) protein is Large ribosomal subunit protein bL21.